The primary structure comprises 667 residues: UvrABC system protein B (667 aa).

The region spanning Ala31 to Gln414 is the Helicase ATP-binding domain. Gly44–Thr51 is an ATP binding site. The short motif at Tyr97 to Ile120 is the Beta-hairpin element. The Helicase C-terminal domain occupies Gln435–Ile597. The UVR domain occupies Leu630 to Gln665.

Belongs to the UvrB family. In terms of assembly, forms a heterotetramer with UvrA during the search for lesions. Interacts with UvrC in an incision complex.

The protein resides in the cytoplasm. Functionally, the UvrABC repair system catalyzes the recognition and processing of DNA lesions. A damage recognition complex composed of 2 UvrA and 2 UvrB subunits scans DNA for abnormalities. Upon binding of the UvrA(2)B(2) complex to a putative damaged site, the DNA wraps around one UvrB monomer. DNA wrap is dependent on ATP binding by UvrB and probably causes local melting of the DNA helix, facilitating insertion of UvrB beta-hairpin between the DNA strands. Then UvrB probes one DNA strand for the presence of a lesion. If a lesion is found the UvrA subunits dissociate and the UvrB-DNA preincision complex is formed. This complex is subsequently bound by UvrC and the second UvrB is released. If no lesion is found, the DNA wraps around the other UvrB subunit that will check the other stand for damage. The polypeptide is UvrABC system protein B (Lactiplantibacillus plantarum (strain ATCC BAA-793 / NCIMB 8826 / WCFS1) (Lactobacillus plantarum)).